We begin with the raw amino-acid sequence, 276 residues long: MISQQSAKHIENQWLALEIGNSRLHWALFMGESLEFTWDTEYLPESVIQQLGNGETKLEVGSEEKEIFFTFFPLPPAPCPLPLFIASVVPQQTVLWENYLNVRVITLDQIPLNNIYPTLGIDRALALWGAGMSWGFPVLVIDAGTALTFTAADGGKNLVGGAILPGVGLQFASLGQQTGQLPQVEMEAIKSLPPRFALNTTEAIQSGVIYTLIAGMRDFTEEWLSLFPDGKVAIKGGDRILLLNYLQALYPDLAARLIVEPNLIFWGMQTIVAGVA.

18 to 25 contributes to the ATP binding site; the sequence is EIGNSRLH. Substrate contacts are provided by residues tyrosine 116 and 120 to 123; that span reads GIDR. Residue aspartate 122 is the Proton acceptor of the active site. Residue aspartate 142 coordinates K(+). An ATP-binding site is contributed by threonine 145. Threonine 200 contacts substrate.

Belongs to the type III pantothenate kinase family. In terms of assembly, homodimer. NH4(+) serves as cofactor. It depends on K(+) as a cofactor.

The protein resides in the cytoplasm. The catalysed reaction is (R)-pantothenate + ATP = (R)-4'-phosphopantothenate + ADP + H(+). Its pathway is cofactor biosynthesis; coenzyme A biosynthesis; CoA from (R)-pantothenate: step 1/5. Functionally, catalyzes the phosphorylation of pantothenate (Pan), the first step in CoA biosynthesis. The sequence is that of Type III pantothenate kinase from Nostoc sp. (strain PCC 7120 / SAG 25.82 / UTEX 2576).